We begin with the raw amino-acid sequence, 41 residues long: MQDLLKYLSTAPVLATVWMIITAGILIEFNRFFPDLLFHPM.

Residues 7-27 (YLSTAPVLATVWMIITAGILI) traverse the membrane as a helical segment.

Belongs to the PsaJ family.

It is found in the cellular thylakoid membrane. Its function is as follows. May help in the organization of the PsaE and PsaF subunits. In Trichodesmium erythraeum (strain IMS101), this protein is Photosystem I reaction center subunit IX.